Here is a 184-residue protein sequence, read N- to C-terminus: Shikimate kinase (184 aa).

17 to 22 (SVGKTS) is a binding site for ATP. Thr21 serves as a coordination point for Mg(2+). Substrate-binding residues include Asp39 and Gly85.

It belongs to the shikimate kinase family. As to quaternary structure, monomer. Mg(2+) is required as a cofactor.

The protein localises to the cytoplasm. It catalyses the reaction shikimate + ATP = 3-phosphoshikimate + ADP + H(+). The protein operates within metabolic intermediate biosynthesis; chorismate biosynthesis; chorismate from D-erythrose 4-phosphate and phosphoenolpyruvate: step 5/7. In terms of biological role, catalyzes the specific phosphorylation of the 3-hydroxyl group of shikimic acid using ATP as a cosubstrate. This is Shikimate kinase from Chlamydia muridarum (strain MoPn / Nigg).